Consider the following 313-residue polypeptide: UDP-glucose 4-epimerase (313 aa).

Residues Phe11–Ile12, Asp31–Gly36, Asp56–Ile57, and Leu77–Ile81 each bind NAD(+). Substrate contacts are provided by Ser121 and Tyr146. Residues Tyr146 and Lys150 each contribute to the NAD(+) site. The active-site Proton acceptor is Tyr146. Substrate-binding positions include Asn175, Val189–Val190, Lys204–Phe206, Arg213, and Arg271–Asp274.

Belongs to the NAD(P)-dependent epimerase/dehydratase family. In terms of assembly, homodimer. It depends on NAD(+) as a cofactor.

It carries out the reaction UDP-alpha-D-glucose = UDP-alpha-D-galactose. It participates in carbohydrate metabolism; galactose metabolism. Its function is as follows. Involved in the metabolism of galactose. Catalyzes the conversion of UDP-galactose (UDP-Gal) to UDP-glucose (UDP-Glc) through a mechanism involving the transient reduction of NAD. The polypeptide is UDP-glucose 4-epimerase (Mycolicibacterium smegmatis (strain ATCC 700084 / mc(2)155) (Mycobacterium smegmatis)).